A 403-amino-acid polypeptide reads, in one-letter code: Imidazolonepropionase (403 aa).

Fe(3+) is bound by residues histidine 74 and histidine 76. Zn(2+) is bound by residues histidine 74 and histidine 76. 4-imidazolone-5-propanoate contacts are provided by arginine 83, tyrosine 146, and histidine 179. Tyrosine 146 serves as a coordination point for N-formimidoyl-L-glutamate. Histidine 242 contacts Fe(3+). Residue histidine 242 coordinates Zn(2+). Residue glutamine 245 coordinates 4-imidazolone-5-propanoate. Position 317 (aspartate 317) interacts with Fe(3+). Residue aspartate 317 coordinates Zn(2+). Residues asparagine 319 and glycine 321 each coordinate N-formimidoyl-L-glutamate. Threonine 322 is a 4-imidazolone-5-propanoate binding site.

The protein belongs to the metallo-dependent hydrolases superfamily. HutI family. It depends on Zn(2+) as a cofactor. Requires Fe(3+) as cofactor.

It localises to the cytoplasm. The enzyme catalyses 4-imidazolone-5-propanoate + H2O = N-formimidoyl-L-glutamate. It participates in amino-acid degradation; L-histidine degradation into L-glutamate; N-formimidoyl-L-glutamate from L-histidine: step 3/3. Catalyzes the hydrolytic cleavage of the carbon-nitrogen bond in imidazolone-5-propanoate to yield N-formimidoyl-L-glutamate. It is the third step in the universal histidine degradation pathway. In Sphingopyxis alaskensis (strain DSM 13593 / LMG 18877 / RB2256) (Sphingomonas alaskensis), this protein is Imidazolonepropionase.